Consider the following 706-residue polypeptide: Elongation factor G (706 aa).

The region spanning 15-291 (LKTRNIGISA…GVLDYLASPV (277 aa)) is the tr-type G domain. GTP contacts are provided by residues 24-31 (AHIDSGKT), 91-95 (DTPGH), and 145-148 (NKLD).

This sequence belongs to the TRAFAC class translation factor GTPase superfamily. Classic translation factor GTPase family. EF-G/EF-2 subfamily.

The protein localises to the cytoplasm. Functionally, catalyzes the GTP-dependent ribosomal translocation step during translation elongation. During this step, the ribosome changes from the pre-translocational (PRE) to the post-translocational (POST) state as the newly formed A-site-bound peptidyl-tRNA and P-site-bound deacylated tRNA move to the P and E sites, respectively. Catalyzes the coordinated movement of the two tRNA molecules, the mRNA and conformational changes in the ribosome. This chain is Elongation factor G, found in Leptospira borgpetersenii serovar Hardjo-bovis (strain JB197).